A 108-amino-acid chain; its full sequence is Parvalbumin beta (108 aa).

Ala1 carries the N-acetylalanine modification. EF-hand domains are found at residues 38-73 and 77-108; these read KSNE…FSAG and LTKT…LVKA. Positions 51, 53, 55, 57, 59, 62, 90, 92, 94, 96, and 101 each coordinate Ca(2+).

This sequence belongs to the parvalbumin family.

In muscle, parvalbumin is thought to be involved in relaxation after contraction. It binds two calcium ions. The chain is Parvalbumin beta from Latimeria chalumnae (Coelacanth).